The chain runs to 98 residues: MIKARYFYLYKLIVRCRFFIAKYNTLFKQQVIEFYIQNGKNYSLISKHFQLDSRTLRHWINQFNHSRINGLAVLGKTRNYSLKFKLNVIQTVKNGQFL.

The protein belongs to the IS150/IS1296 orfA family.

This is an uncharacterized protein from Haemophilus influenzae (strain ATCC 51907 / DSM 11121 / KW20 / Rd).